Reading from the N-terminus, the 231-residue chain is Large ribosomal subunit protein uL1 (231 aa).

This sequence belongs to the universal ribosomal protein uL1 family. Part of the 50S ribosomal subunit.

Binds directly to 23S rRNA. The L1 stalk is quite mobile in the ribosome, and is involved in E site tRNA release. Functionally, protein L1 is also a translational repressor protein, it controls the translation of the L11 operon by binding to its mRNA. In Acinetobacter baylyi (strain ATCC 33305 / BD413 / ADP1), this protein is Large ribosomal subunit protein uL1.